The chain runs to 741 residues: Zinc finger protein 425 (741 aa).

The region spanning 1-69 (DDVALYFSGQ…EQGCLDKTRR (69 aa)) is the KRAB domain. 2 disordered regions span residues 67–86 (TRRT…DTGK) and 128–169 (RRDT…TPGR). Over residues 132-151 (FQSPSLQETEIPNKKVSITA) the composition is skewed to polar residues. Residues 153–168 (DPDKKDLRHKPRETPG) show a composition bias toward basic and acidic residues. C2H2-type zinc fingers lie at residues 179–201 (YSCY…KRSH), 235–257 (FQCS…QVVH), 263–285 (YPCP…LCLH), 291–313 (FCCG…LRLH), 319–341 (FQCP…LSQH), 347–369 (FHCP…QRTH), 375–397 (FSCD…IRVH), 403–425 (FSCP…GLQH), 431–453 (FQCP…QRLH), 459–481 (FPCA…TRVH), 487–509 (FPCG…LKVH), 515–537 (FSCA…TRLH), 543–565 (FQCP…QRMH), 571–593 (FACS…LRLH), 599–621 (YQCP…LLQH), 627–649 (FSCV…IRVH), 655–677 (FQCP…LYTH), 683–705 (FQCP…LCLH), and 711–733 (FSCD…IAVH).

Belongs to the krueppel C2H2-type zinc-finger protein family.

The protein localises to the nucleus. It localises to the cytoplasm. Functionally, acts as a transcriptional repressor. The protein is Zinc finger protein 425 (ZNF425) of Macaca fascicularis (Crab-eating macaque).